The chain runs to 670 residues: Probable ATP-citrate synthase subunit 1 (670 aa).

A disordered region spans residues 1–22 (MPSATTASTNGANGASASPAPG). ATP contacts are provided by residues 257-277 (LLRYQADPDCKILVLLGEVGG) and 308-334 (FKTEVQFGHAGAFANSQLETAATKNKS). Mg(2+) is bound at residue Glu274. Residue His316 is the Tele-phosphohistidine intermediate of the active site. 335-345 (MREAGFYVPDT) is a binding site for CoA.

Belongs to the succinate/malate CoA ligase alpha subunit family. As to quaternary structure, composed of two subunits.

The protein localises to the cytoplasm. It carries out the reaction oxaloacetate + acetyl-CoA + ADP + phosphate = citrate + ATP + CoA. Functionally, catalyzes the formation of cytosolic acetyl-CoA, which is mainly used for the biosynthesis of fatty acids and sterols. This chain is Probable ATP-citrate synthase subunit 1, found in Neurospora crassa (strain ATCC 24698 / 74-OR23-1A / CBS 708.71 / DSM 1257 / FGSC 987).